Reading from the N-terminus, the 163-residue chain is Centrosomal protein of 19 kDa (163 aa).

The protein belongs to the CEP19 family. Interacts with CEP43; this interaction is required for its localization to the mother centriole. Interacts (via residues 121-150) with RABL2B. Interacts (via C-terminus) with CEP350; this interaction is required for its localization to the mother centriole.

Its subcellular location is the cytoplasm. It localises to the cytoskeleton. The protein localises to the microtubule organizing center. The protein resides in the centrosome. It is found in the centriole. Its subcellular location is the spindle pole. It localises to the cilium basal body. Functionally, required for ciliation. Recruits the RABL2B GTPase to the ciliary base to initiate ciliation. After specifically capturing the activated GTP-bound RABL2B, the CEP19-RABL2B complex binds intraflagellar transport (IFT) complex B from the large pool pre-docked at the base of the cilium and thus triggers its entry into the cilia. Involved in the early steps in cilia formation by recruiting the ciliary vesicles (CVs) to the distal end of the mother centriole where they fuse to initiate cilium assembly. Involved in microtubule (MT) anchoring to the centrosomes. The sequence is that of Centrosomal protein of 19 kDa (CEP19) from Homo sapiens (Human).